The primary structure comprises 91 residues: Sec-independent protein translocase protein TatA (91 aa).

The helical transmembrane segment at 1-21 (MGAMQPMHWLIVAVVVVILFG) threads the bilayer.

The protein belongs to the TatA/E family. In terms of assembly, the Tat system comprises two distinct complexes: a TatABC complex, containing multiple copies of TatA, TatB and TatC subunits, and a separate TatA complex, containing only TatA subunits. Substrates initially bind to the TatABC complex, which probably triggers association of the separate TatA complex to form the active translocon.

Its subcellular location is the cell membrane. Functionally, part of the twin-arginine translocation (Tat) system that transports large folded proteins containing a characteristic twin-arginine motif in their signal peptide across membranes. TatA could form the protein-conducting channel of the Tat system. The chain is Sec-independent protein translocase protein TatA from Rhodococcus erythropolis (strain PR4 / NBRC 100887).